Consider the following 481-residue polypeptide: Leukocyte immunoglobulin-like receptor subfamily A member 6 (481 aa).

The signal sequence occupies residues 1-23 (MTPALTALLCLGLSLGPRTHVQA). The Ig-like C2-type 1 domain occupies 24 to 118 (GPLPKPTLWA…PSDPLELVVT (95 aa)). The Extracellular segment spans residues 24-447 (GPLPKPTLWA…SHAKDYTVEN (424 aa)). Cys49 and Cys98 are joined by a disulfide. Asn139 carries N-linked (GlcNAc...) asparagine glycosylation. Intrachain disulfides connect Cys144–Cys196 and Cys245–Cys296. Ig-like C2-type domains follow at residues 225–314 (PSLL…DPLN) and 323–408 (DRVS…HLLS). Asn301 and Asn340 each carry an N-linked (GlcNAc...) asparagine glycan. Residues Cys345 and Cys396 are joined by a disulfide bond. Residues 418 to 439 (VSGPSGGPSLPPTGPPSTPASH) are disordered. Residues 426 to 435 (SLPPTGPPST) show a composition bias toward pro residues. A helical transmembrane segment spans residues 448–468 (LIRMGMAGLVLVVLGILLFEA). Residues 469–481 (QHSQRSPQDAARR) are Cytoplasmic-facing.

It localises to the membrane. May act as receptor for class I MHC antigens. The polypeptide is Leukocyte immunoglobulin-like receptor subfamily A member 6 (LILRA6) (Pan troglodytes (Chimpanzee)).